A 315-amino-acid chain; its full sequence is Cross-pathway control WD-repeat protein 2 (315 aa).

7 WD repeats span residues 14–54, 62–101, 104–144, 147–188, 191–230, 232–270, and 282–315; these read GHKG…DSYG, GHNHFVSDVVISSDGQFALSSSWDHTLRLWDLNTGATTRR, GHTS…YDIK, CHTE…LKTN, GHTGYINTVSVSPDGSLAASGGKDGITMLWDLNEGKHLYS, EAGDIVNALVFSPNRYWLCAATASCVKIFDLESKSIVDE, and GRQPECVSIAWSADGQTLFAGFTDNQLRVWTVTS.

This sequence belongs to the WD repeat G protein beta family. Ribosomal protein RACK1 subfamily.

Functionally, component of the ribosome, a large ribonucleoprotein complex responsible for the synthesis of proteins in the cell. The small ribosomal subunit (SSU) binds messenger RNAs (mRNAs) and translates the encoded message by selecting cognate aminoacyl-transfer RNA (tRNA) molecules. The large subunit (LSU) contains the ribosomal catalytic site termed the peptidyl transferase center (PTC), which catalyzes the formation of peptide bonds, thereby polymerizing the amino acids delivered by tRNAs into a polypeptide chain. The nascent polypeptides leave the ribosome through a tunnel in the LSU and interact with protein factors that function in enzymatic processing, targeting, and the membrane insertion of nascent chains at the exit of the ribosomal tunnel. Plays in important role in the regulation of vegetative growth and fruiting body development. Especially, positively regulates the expression of genes involved in fruiting body development such as FVFD30 and FVFD16, as well as genes encoding for lectins and hydrophobins. Also regulates the expression of genes involved in cAMP signaling pathway. The protein is Cross-pathway control WD-repeat protein 2 of Flammulina velutipes (Agaricus velutipes).